Consider the following 89-residue polypeptide: Large ribosomal subunit protein bL27 (89 aa).

Residues 1–22 (MAHTKKGGSSRNGRDSESKRLG) form a disordered region.

The protein belongs to the bacterial ribosomal protein bL27 family.

The protein is Large ribosomal subunit protein bL27 of Brucella melitensis biotype 1 (strain ATCC 23456 / CCUG 17765 / NCTC 10094 / 16M).